Here is a 910-residue protein sequence, read N- to C-terminus: DNA mismatch repair protein MutS (910 aa).

The segment covering 1 to 11 (MEAKVEEKEPE) has biased composition (basic and acidic residues). Positions 1–21 (MEAKVEEKEPEPVENAGPDAP) are disordered. 658–665 (GPNMGGKS) lines the ATP pocket.

It belongs to the DNA mismatch repair MutS family.

In terms of biological role, this protein is involved in the repair of mismatches in DNA. It is possible that it carries out the mismatch recognition step. This protein has a weak ATPase activity. In Brucella canis (strain ATCC 23365 / NCTC 10854 / RM-666), this protein is DNA mismatch repair protein MutS.